The following is a 178-amino-acid chain: FXYD domain-containing ion transport regulator 5 (178 aa).

Residues 1–21 (MSPSGRLCLLTIVGLILPTRG) form the signal peptide. Residues 22–145 (QTLKDTTSSS…FYDEHTLRKR (124 aa)) lie on the Extracellular side of the membrane. Residues 23–131 (TLKDTTSSSS…QTLKPSGFHE (109 aa)) form a disordered region. Low complexity-rich tracts occupy residues 26–36 (DTTSSSSADST) and 68–77 (TPQPQTQTQQ). Polar residues predominate over residues 103 to 125 (DTTTLSERPSPSTDVQTDPQTLK). Residues 146-164 (GLLVAAVLFITGIIILTSG) form a helical membrane-spanning segment. Residues 165 to 178 (KCRQLSRLCRNRCR) lie on the Cytoplasmic side of the membrane.

This sequence belongs to the FXYD family. Regulatory subunit of the sodium/potassium-transporting ATPase which is composed of a catalytic alpha subunit, a non-catalytic beta subunit and an additional regulatory subunit. The regulatory subunit, a member of the FXYD protein family, modulates the enzymatic activity in a tissue- and isoform-specific way by changing affinities of the Na+/K+-ATPase toward Na(+), K(+) or ATP. In terms of processing, glycosylated.

It is found in the cell membrane. The protein localises to the basolateral cell membrane. Its function is as follows. Associates with and regulates the activity of the sodium/potassium-transporting ATPase (NKA) which catalyzes the hydrolysis of ATP coupled with the exchange of Na(+) and K(+) ions across the plasma membrane. May increase NKA activity by increasing the apparent affinity for Na(+). Involved in down-regulation of E-cadherin which results in reduced cell adhesion. Promotes metastasis. This chain is FXYD domain-containing ion transport regulator 5 (FXYD5), found in Homo sapiens (Human).